We begin with the raw amino-acid sequence, 214 residues long: Large ribosomal subunit protein uL6m (214 aa).

The N-terminal 16 residues, methionine 1–arginine 16, are a transit peptide targeting the mitochondrion.

This sequence belongs to the universal ribosomal protein uL6 family. As to quaternary structure, component of the mitochondrial large ribosomal subunit (mt-LSU). Mature yeast 74S mitochondrial ribosomes consist of a small (37S) and a large (54S) subunit. The 37S small subunit contains a 15S ribosomal RNA (15S mt-rRNA) and 34 different proteins. The 54S large subunit contains a 21S rRNA (21S mt-rRNA) and 46 different proteins.

The protein localises to the mitochondrion. In terms of biological role, component of the mitochondrial ribosome (mitoribosome), a dedicated translation machinery responsible for the synthesis of mitochondrial genome-encoded proteins, including at least some of the essential transmembrane subunits of the mitochondrial respiratory chain. The mitoribosomes are attached to the mitochondrial inner membrane and translation products are cotranslationally integrated into the membrane. The protein is Large ribosomal subunit protein uL6m (MRPL6) of Saccharomyces cerevisiae (strain ATCC 204508 / S288c) (Baker's yeast).